The chain runs to 287 residues: 33 kDa chaperonin (287 aa).

Disulfide bonds link cysteine 231-cysteine 233 and cysteine 264-cysteine 267.

Belongs to the HSP33 family. In terms of processing, under oxidizing conditions two disulfide bonds are formed involving the reactive cysteines. Under reducing conditions zinc is bound to the reactive cysteines and the protein is inactive.

It is found in the cytoplasm. Redox regulated molecular chaperone. Protects both thermally unfolding and oxidatively damaged proteins from irreversible aggregation. Plays an important role in the bacterial defense system toward oxidative stress. The protein is 33 kDa chaperonin of Thermosipho melanesiensis (strain DSM 12029 / CIP 104789 / BI429).